The primary structure comprises 299 residues: Anti-sigma-D factor RsdA (299 aa).

A helical membrane pass occupies residues 86-106; it reads LAAVGSVAAALLVLSGFGAVV. The tract at residues 187–299 is disordered; the sequence is NTKVETRDPN…APETPVSPTH (113 aa). Low complexity-rich tracts occupy residues 201 to 212 and 250 to 271; these read PGSPSNPAAPGS and PNST…EPGS.

As to quaternary structure, interacts with ECF RNA polymerase sigma factor SigD; this should inhibit the interaction of SigD with the RNA polymerase catalytic core. In terms of processing, the cytosolic fragment is degraded by a ClpP1-ClpP2-ClpX complex, as would be expected after S1P and S2P intramembrane proteolysis. This releases SigD so that it may bind to the RNA polymerase catalytic core.

It localises to the cell membrane. In terms of biological role, an anti-sigma factor for extracytoplasmic function (ECF) sigma factor SigD. ECF sigma factors are held in an inactive form by an anti-sigma factor until released by regulated intramembrane proteolysis (RIP). RIP occurs when an extracytoplasmic signal triggers a concerted proteolytic cascade to transmit information and elicit cellular responses. The membrane-spanning regulatory substrate protein is first cut extracytoplasmically (site-1 protease, S1P), then within the membrane itself (site-2 protease, S2P), while cytoplasmic proteases finish degrading the regulatory protein, liberating the sigma factor. Neither S1P nor S2P proteases have been so far identified for this anti-sigma factor. In Mycobacterium bovis (strain ATCC BAA-935 / AF2122/97), this protein is Anti-sigma-D factor RsdA (rsda).